Here is a 248-residue protein sequence, read N- to C-terminus: Phosphoribosyl isomerase A (248 aa).

Aspartate 14 acts as the Proton acceptor in catalysis. The active-site Proton donor is aspartate 133.

This sequence belongs to the HisA/HisF family.

It is found in the cytoplasm. The catalysed reaction is 1-(5-phospho-beta-D-ribosyl)-5-[(5-phospho-beta-D-ribosylamino)methylideneamino]imidazole-4-carboxamide = 5-[(5-phospho-1-deoxy-D-ribulos-1-ylimino)methylamino]-1-(5-phospho-beta-D-ribosyl)imidazole-4-carboxamide. It carries out the reaction N-(5-phospho-beta-D-ribosyl)anthranilate = 1-(2-carboxyphenylamino)-1-deoxy-D-ribulose 5-phosphate. The protein operates within amino-acid biosynthesis; L-histidine biosynthesis; L-histidine from 5-phospho-alpha-D-ribose 1-diphosphate: step 4/9. It functions in the pathway amino-acid biosynthesis; L-tryptophan biosynthesis; L-tryptophan from chorismate: step 3/5. Its function is as follows. Involved in both the histidine and tryptophan biosynthetic pathways. The sequence is that of Phosphoribosyl isomerase A from Mycobacterium sp. (strain JLS).